The sequence spans 325 residues: tRNA N6-adenosine threonylcarbamoyltransferase (325 aa).

Residues His-111 and His-115 each coordinate Fe cation. Substrate contacts are provided by residues 134–138 (LVSGG), Asp-167, Gly-180, Asp-184, and Asn-284. Residue Asp-312 participates in Fe cation binding.

Belongs to the KAE1 / TsaD family. Fe(2+) is required as a cofactor.

It localises to the cytoplasm. The enzyme catalyses L-threonylcarbamoyladenylate + adenosine(37) in tRNA = N(6)-L-threonylcarbamoyladenosine(37) in tRNA + AMP + H(+). Its function is as follows. Required for the formation of a threonylcarbamoyl group on adenosine at position 37 (t(6)A37) in tRNAs that read codons beginning with adenine. Is involved in the transfer of the threonylcarbamoyl moiety of threonylcarbamoyl-AMP (TC-AMP) to the N6 group of A37, together with TsaE and TsaB. TsaD likely plays a direct catalytic role in this reaction. In Trichodesmium erythraeum (strain IMS101), this protein is tRNA N6-adenosine threonylcarbamoyltransferase.